Reading from the N-terminus, the 197-residue chain is Holliday junction branch migration complex subunit RuvA (197 aa).

The interval 1-64 (MYEYIKGKYI…EDFIGVYGFL (64 aa)) is domain I. Residues 65–144 (TKDELSMFKL…DILEEDDEQI (80 aa)) are domain II. The flexible linker stretch occupies residues 145 to 149 (INKVT). The segment at 149 to 197 (TDDKKVLEAVAALVTLGYSEKEANKVINSCDKNNSLEQIIKEALKYLMK) is domain III.

The protein belongs to the RuvA family. In terms of assembly, homotetramer. Forms an RuvA(8)-RuvB(12)-Holliday junction (HJ) complex. HJ DNA is sandwiched between 2 RuvA tetramers; dsDNA enters through RuvA and exits via RuvB. An RuvB hexamer assembles on each DNA strand where it exits the tetramer. Each RuvB hexamer is contacted by two RuvA subunits (via domain III) on 2 adjacent RuvB subunits; this complex drives branch migration. In the full resolvosome a probable DNA-RuvA(4)-RuvB(12)-RuvC(2) complex forms which resolves the HJ.

It is found in the cytoplasm. The RuvA-RuvB-RuvC complex processes Holliday junction (HJ) DNA during genetic recombination and DNA repair, while the RuvA-RuvB complex plays an important role in the rescue of blocked DNA replication forks via replication fork reversal (RFR). RuvA specifically binds to HJ cruciform DNA, conferring on it an open structure. The RuvB hexamer acts as an ATP-dependent pump, pulling dsDNA into and through the RuvAB complex. HJ branch migration allows RuvC to scan DNA until it finds its consensus sequence, where it cleaves and resolves the cruciform DNA. The polypeptide is Holliday junction branch migration complex subunit RuvA (Clostridium botulinum (strain Kyoto / Type A2)).